The sequence spans 210 residues: Large ribosomal subunit protein bL25 (210 aa).

The interval 185–210 is disordered; sequence APEPAGQPEVPPEPAEEAKAKTIEKE. Positions 200 to 210 are enriched in basic and acidic residues; the sequence is EEAKAKTIEKE.

The protein belongs to the bacterial ribosomal protein bL25 family. CTC subfamily. Part of the 50S ribosomal subunit; part of the 5S rRNA/L5/L18/L25 subcomplex. Contacts the 5S rRNA. Binds to the 5S rRNA independently of L5 and L18.

In terms of biological role, this is one of the proteins that binds to the 5S RNA in the ribosome where it forms part of the central protuberance. This Desulforamulus reducens (strain ATCC BAA-1160 / DSM 100696 / MI-1) (Desulfotomaculum reducens) protein is Large ribosomal subunit protein bL25.